The sequence spans 1166 residues: ATP-dependent helicase/deoxyribonuclease subunit B (1166 aa).

One can recognise a UvrD-like helicase ATP-binding domain in the interval 1–390 (MGVEFLVGRS…HPLIEFIRSS (390 aa)). 8 to 15 (GRSGSGKT) provides a ligand contact to ATP. One can recognise a UvrD-like helicase C-terminal domain in the interval 281-586 (TKRHQHAPEL…HFSLIPPALD (306 aa)). [4Fe-4S] cluster-binding residues include cysteine 801, cysteine 1121, cysteine 1124, and cysteine 1130.

It belongs to the helicase family. AddB/RexB type 1 subfamily. Heterodimer of AddA and AddB. Requires Mg(2+) as cofactor. It depends on [4Fe-4S] cluster as a cofactor.

Its function is as follows. The heterodimer acts as both an ATP-dependent DNA helicase and an ATP-dependent, dual-direction single-stranded exonuclease. Recognizes the chi site generating a DNA molecule suitable for the initiation of homologous recombination. The AddB subunit has 5' -&gt; 3' nuclease activity but not helicase activity. In Bacillus velezensis (strain DSM 23117 / BGSC 10A6 / LMG 26770 / FZB42) (Bacillus amyloliquefaciens subsp. plantarum), this protein is ATP-dependent helicase/deoxyribonuclease subunit B.